Reading from the N-terminus, the 78-residue chain is Omega-conotoxin-like 2 (78 aa).

Positions Met1 to Ala22 are cleaved as a signal peptide. Residues Asp23–Lys42 constitute a propeptide that is removed on maturation. Disulfide bonds link Cys46–Cys62, Cys53–Cys65, and Cys61–Cys72.

The protein belongs to the conotoxin O1 superfamily. As to expression, expressed by the venom duct.

The protein localises to the secreted. Omega-conotoxins act at presynaptic membranes, they bind and block voltage-gated calcium channels (Cav). This chain is Omega-conotoxin-like 2, found in Conus striatus (Striated cone).